We begin with the raw amino-acid sequence, 567 residues long: SRSF protein kinase 3 (567 aa).

A compositionally biased stretch (gly residues) spans M1 to G16. The disordered stretch occupies residues M1–L36. A compositionally biased stretch (low complexity) spans S17 to S32. A Phosphoserine modification is found at S50. The 487-residue stretch at Y79–L565 folds into the Protein kinase domain. ATP contacts are provided by residues L85–V93 and K108. D212 (proton acceptor) is an active-site residue. Disordered regions lie at residues Q238–E283 and A298–S351. The segment covering S248–L258 has biased composition (polar residues). A compositionally biased stretch (basic residues) spans S264 to K279. The span at A327–S348 shows a compositional bias: low complexity. S330 is subject to Phosphoserine.

This sequence belongs to the protein kinase superfamily. CMGC Ser/Thr protein kinase family. In terms of tissue distribution, expressed in skeletal and heart muscle. Also expressed in the fetal brain.

It is found in the nucleus. Its subcellular location is the cytoplasm. The catalysed reaction is L-seryl-[protein] + ATP = O-phospho-L-seryl-[protein] + ADP + H(+). The enzyme catalyses L-threonyl-[protein] + ATP = O-phospho-L-threonyl-[protein] + ADP + H(+). Functionally, serine/arginine-rich protein-specific kinase which specifically phosphorylates its substrates at serine residues located in regions rich in arginine/serine dipeptides, known as RS domains. Phosphorylates the SR splicing factor SRSF1 and the lamin-B receptor (LBR) in vitro. Required for normal muscle development. The chain is SRSF protein kinase 3 (SRPK3) from Homo sapiens (Human).